A 236-amino-acid chain; its full sequence is Truncated formate dehydrogenase 2 (236 aa).

NAD(+)-binding positions include 36-37, Asp57, 104-108, Thr130, Asp156, and 185-188; these read RI, PLHKD, and HISG.

This sequence belongs to the D-isomer specific 2-hydroxyacid dehydrogenase family. FDH subfamily.

The sequence is that of Truncated formate dehydrogenase 2 from Saccharomyces cerevisiae (strain ATCC 204508 / S288c) (Baker's yeast).